The chain runs to 380 residues: MYAPYATMPDRSRGRAVPEEESSFRSPFQRDRDRIIHASAFRRLKHKTQVFVEHEGDNYRTRLTHSIEVGQVARTIAGALGLNQELTEAVALAHDLGHTPFGHTGEDALHEMMAPYGGFDHNAQAIRIVTALERHYAEFDGLNLTWETLEAIAKHNGPVVGELPWALAACNRGIDLELHTHASAEAQVAALADDIAYNHHDLHDGLRAGLFTDDDVCSLSIIAPAYAEVDEIYPGLDHNRRRHEALRRFFGVMVSDVIETSRRKIAASGAQSVEEIRALDHAVVTFSDEIWTQLRELRAFMFTRMYRAPSVMVVRERVAVVVKALFAYYLENTMAMPERWHGDIRKAETETDRARIVSDYIAGMTDRFALQLYDRLALGA.

The interval M1–F28 is disordered. The 137-residue stretch at R62–N198 folds into the HD domain.

This sequence belongs to the dGTPase family. Type 2 subfamily.

This is Deoxyguanosinetriphosphate triphosphohydrolase-like protein from Ruegeria sp. (strain TM1040) (Silicibacter sp.).